A 439-amino-acid polypeptide reads, in one-letter code: MLTYKQRQSLNHAICDYVRQNEGSDELLVQLESVLLPNGSDVIPQDPNLLERKWNSIVRLQSKIMELEKNCEELQKSIDEQQSSTNQISNASSDWCPRDTPSFQITLDASITALCLHPSLPIIFIGLDSGKLLRYDILNVELPLQSTMAHMDGITSISISLPNENGRPAYLATTSKDLNTKIWELELDSTLSHIKTLAGHEHTVSDCQFFERGADLLLATCSRDLYLKIWDISNGWCIKSFQPHTQWIRSLHVHGEFVLTGSNDSAIRLTHWPSGNGLSMGIGHDFPVEKVLILIPDPQHLQPQYQPLGFQHVASASRDGTIRLWKVSLPKFIPHRPPRPNPLDTTFKVIAVLTDHNSWVRDLRQFNDMLFSCSDDGSVKCWSLDWTNLSTTTCKKSWDLSNKGFQNCLTLDNIAFTGLPSRKLLFSGSSEGTLTSFMR.

A coiled-coil region spans residues 55–90 (NSIVRLQSKIMELEKNCEELQKSIDEQQSSTNQISN). WD repeat units lie at residues 106–145 (TLDASITALCLHPSLPIIFIGLDSGKLLRYDILNVELPLQ), 149–193 (AHMD…TLSH), 199–240 (GHEH…CIKS), 243–282 (PHTQWIRSLHVHGEFVLTGSNDSAIRLTHWPSGNGLSMGI), 295–335 (IPDP…FIPH), 355–392 (DHNSWVRDLRQFNDMLFSCSDDGSVKCWSLDWTNLSTT), and 402–438 (NKGFQNCLTLDNIAFTGLPSRKLLFSGSSEGTLTSFM).

This sequence belongs to the WD repeat LIS1/nudF family. As to quaternary structure, self-associates. Interacts with NDL1 and dynein.

The protein resides in the cytoplasm. The protein localises to the cytoskeleton. It localises to the spindle pole. Functionally, positively regulates the activity of the minus-end directed microtubule motor protein dynein. Plays a central role in positioning the mitotic spindle at the bud neck during cell division. Targets cytoplasmic dynein to microtubule plus ends, thereby promoting dynein-mediated microtubule sliding along the bud cortex and consequently the movement of the mitotic spindle to the bud neck. This is Nuclear distribution protein PAC1 from Kluyveromyces lactis (strain ATCC 8585 / CBS 2359 / DSM 70799 / NBRC 1267 / NRRL Y-1140 / WM37) (Yeast).